Consider the following 310-residue polypeptide: MAPKIFIDGEHGTTGLQIRTRMAGRRDVELLSIPEAERRNAAMREDMLNGADIAILCLPDDASKEAVQMVSANNNVRVIDTSTAFRVNPGWAYGFAEMDKQQADKIAAARFVANPGCYPTGAIGLIRPLRAAGILPDGYPITVNAVSGYTGGGKQMIAQMENPDHPDAITAPHFLYGLPLTHKHVPEMTVHGLLDRAPIFSPSVGKFAQGMIVQVPLHLDDLAEGTTMESIHAALVAHYAGQDIVSVVPLAESKALPRVNAIELEGKDTMKLFVFGTPGASQVNLVALLDNLGKGASGAAVQNMDLMLAS.

Cys117 is a catalytic residue.

It belongs to the NAGSA dehydrogenase family. Type 2 subfamily.

The protein localises to the cytoplasm. The enzyme catalyses N-acetyl-L-glutamate 5-semialdehyde + phosphate + NADP(+) = N-acetyl-L-glutamyl 5-phosphate + NADPH + H(+). Its pathway is amino-acid biosynthesis; L-arginine biosynthesis; N(2)-acetyl-L-ornithine from L-glutamate: step 3/4. Functionally, catalyzes the NADPH-dependent reduction of N-acetyl-5-glutamyl phosphate to yield N-acetyl-L-glutamate 5-semialdehyde. This chain is N-acetyl-gamma-glutamyl-phosphate reductase, found in Rhizobium johnstonii (strain DSM 114642 / LMG 32736 / 3841) (Rhizobium leguminosarum bv. viciae).